We begin with the raw amino-acid sequence, 299 residues long: MATFPASLLILNGKGADNQPLRDAIGLLRDEGVEIHVRVTWEKGDAQRYVDEARQLGVETVIAGGGDGTINEVSAALIQCQGGNVPALGILPLGTANDFATSAGIPEALDKALKLAIAGNAVAIDIAQVNDKTCFINMATGGFGTRITTETPEKLKAALGGVSYFIHGLMRMDTLKPDRCEIRGENFHWQGDALVIGIGNGRQAGGGQQLCPGALINDGLLQLRIFTGEELLPALFSTLTQPEENPNIVDGASAWFDIQAPHEITFNLDGEPLSGQEFHIEILPNALRCRLPPDCPLLR.

In terms of domain architecture, DAGKc spans 2-133 (ATFPASLLIL…IDIAQVNDKT (132 aa)). ATP contacts are provided by residues Thr40, 66-72 (GDGTINE), and Thr95. Mg(2+)-binding residues include Leu215, Asp218, and Leu220. Glu271 serves as the catalytic Proton acceptor.

This sequence belongs to the diacylglycerol/lipid kinase family. YegS lipid kinase subfamily. Requires Mg(2+) as cofactor. Ca(2+) is required as a cofactor.

It is found in the cytoplasm. Functionally, probably phosphorylates lipids; the in vivo substrate is unknown. This Citrobacter koseri (strain ATCC BAA-895 / CDC 4225-83 / SGSC4696) protein is Probable lipid kinase YegS-like.